A 566-amino-acid chain; its full sequence is Protein RocB (566 aa).

In terms of biological role, involved in arginine degradative pathway. The sequence is that of Protein RocB (rocB) from Bacillus subtilis (strain 168).